The sequence spans 217 residues: Yop proteins translocation protein R (217 aa).

Transmembrane regions (helical) follow at residues 11–31 (IIVL…TSFV), 53–73 (MAMY…VGFA), 157–177 (IGFL…NILL), and 181–201 (MMMV…FVLL).

Belongs to the FliP/MopC/SpaP family.

It localises to the cell membrane. Functionally, component of the yop secretion machinery. May have a role in the negative pathway regulation of yop expression controlled by calcium. The protein is Yop proteins translocation protein R (yscR) of Yersinia pestis.